The primary structure comprises 206 residues: Large ribosomal subunit protein eL13z (206 aa).

The tract at residues 183-206 (ERTNKRHAGARAKRAADAEKEEKK) is disordered. Over residues 186 to 195 (NKRHAGARAK) the composition is skewed to basic residues. Residues 196-206 (RAADAEKEEKK) are compositionally biased toward basic and acidic residues.

This sequence belongs to the eukaryotic ribosomal protein eL13 family.

This is Large ribosomal subunit protein eL13z from Brassica napus (Rape).